The primary structure comprises 124 residues: Apolipoprotein C-IV (124 aa).

The first 27 residues, 1-27, serve as a signal peptide directing secretion; it reads MSLLRCRQQTLPSLCLSVLFLACFVAS.

This sequence belongs to the apolipoprotein C4 family.

Its subcellular location is the secreted. Functionally, may participate in lipoprotein metabolism. The chain is Apolipoprotein C-IV (Apoc4) from Rattus norvegicus (Rat).